Reading from the N-terminus, the 533-residue chain is MWLGRRALCALVLLLACASLGLLYASTRDAPGLRLPLAPWAPPQSPRRPELPDLAPEPRYAHIPVRIKEQVVGLLAWNNCSCESSGGGLPLPFQKQVRAIDLTKAFDPAELRAASATREQEFQAFLSRSQSPADQLLIAPANSPLQYPLQGVEVQPLRSILVPGLSLQAASGQEVYQVNLTASLGTWDVAGEVTGVTLTGEGQADLTLVSPGLDQLNRQLQLVTYSSRSYQTNTADTVRFSTEGHEAAFTIRIRHPPNPRLYPPGSLPQGAQYNISALVTIATKTFLRYDRLRALITSIRRFYPTVTVVIADDSDKPERVSGPYVEHYLMPFGKGWFAGRNLAVSQVTTKYVLWVDDDFVFTARTRLERLVDVLERTPLDLVGGAVREISGFATTYRQLLSVEPGAPGLGNCLRQRRGFHHELVGFPGCVVTDGVVNFFLARTDKVREVGFDPRLSRVAHLEFFLDGLGSLRVGSCSDVVVDHASKLKLPWTSRDAGAETYARYRYPGSLDESQMAKHRLLFFKHRLQCMTSQ.

The Cytoplasmic segment spans residues 1–7 (MWLGRRA). The chain crosses the membrane as a helical; Signal-anchor for type II membrane protein span at residues 8-25 (LCALVLLLACASLGLLYA). At 26 to 533 (STRDAPGLRL…KHRLQCMTSQ (508 aa)) the chain is on the lumenal side. Residues Asn79, Asn179, and Asn274 are each glycosylated (N-linked (GlcNAc...) asparagine). Cys429 and Cys476 are joined by a disulfide.

The protein belongs to the glycosyltransferase 2 family. In terms of assembly, homodimer; disulfide-linked.

The protein resides in the golgi apparatus membrane. It carries out the reaction a ganglioside GM3 (d18:1(4E)) + UDP-N-acetyl-alpha-D-galactosamine = a ganglioside GM2 (d18:1(4E)) + UDP + H(+). The catalysed reaction is a ganglioside GM3 + UDP-N-acetyl-alpha-D-galactosamine = a ganglioside GM2 + UDP + H(+). It catalyses the reaction a ganglioside GD3 + UDP-N-acetyl-alpha-D-galactosamine = a ganglioside GD2 + UDP + H(+). The enzyme catalyses a ganglioside GD3 (d18:1(4E)) + UDP-N-acetyl-alpha-D-galactosamine = a ganglioside GD2 (d18:1(4E)) + UDP + H(+). It carries out the reaction a beta-D-Gal-(1-&gt;4)-beta-D-Glc-(1&lt;-&gt;1)-Cer(d18:1(4E)) + UDP-N-acetyl-alpha-D-galactosamine = a ganglioside GA2 (d18:1(4E)) + UDP + H(+). The catalysed reaction is a ganglioside GD1a + UDP-N-acetyl-alpha-D-galactosamine = a ganglioside GalNAc-GD1a + UDP + H(+). It catalyses the reaction a ganglioside GT3 (d18:1(4E)) + UDP-N-acetyl-alpha-D-galactosamine = a ganglioside GT2 (d18:1(4E)) + UDP + H(+). The enzyme catalyses a beta-D-galactosyl-(1-&gt;4)-beta-D-glucosyl-(1&lt;-&gt;1)-ceramide + UDP-N-acetyl-alpha-D-galactosamine = a ganglioside GA2 + UDP + H(+). It carries out the reaction a neolactoside IV(3)-alpha-NeuGc-nLc4Cer + UDP-N-acetyl-alpha-D-galactosamine = a neolactoside IV(4)-beta-GalNAc-IV(3)-alpha-NeuGc-nLc4Cer + UDP + H(+). The protein operates within sphingolipid metabolism. Functionally, involved in the biosynthesis of gangliosides GM2, GD2, GT2 and GA2 from GM3, GD3, GT3 and GA3, respectively. The protein is Beta-1,4 N-acetylgalactosaminyltransferase 1 of Homo sapiens (Human).